The sequence spans 919 residues: Probable dipeptidyl-aminopeptidase B (919 aa).

A compositionally biased stretch (basic and acidic residues) spans 1–10 (MRPSDDHGET). The disordered stretch occupies residues 1–50 (MRPSDDHGETSEFLPITRSRSVSAASQTSTDSSLSTESLFPGEQKPFPNV). The Cytoplasmic segment spans residues 1–92 (MRPSDDHGET…AATGGGRARR (92 aa)). Low complexity predominate over residues 21–38 (SVSAASQTSTDSSLSTES). A helical; Signal-anchor for type II membrane protein transmembrane segment spans residues 93–113 (IFWILVLLCLGGWLLAFALFL). Residues 114-919 (TGGRANYQTA…MKRSLPLLYP (806 aa)) are Vacuolar-facing. N-linked (GlcNAc...) asparagine glycosylation is found at Asn-200, Asn-352, and Asn-643. The active-site Charge relay system is the Ser-757. N-linked (GlcNAc...) asparagine glycosylation occurs at Asn-811. Active-site charge relay system residues include Asp-834 and His-867.

The protein belongs to the peptidase S9B family.

The protein resides in the vacuole membrane. The enzyme catalyses Release of an N-terminal dipeptide, Xaa-Yaa-|-Zaa-, from a polypeptide, preferentially when Yaa is Pro, provided Zaa is neither Pro nor hydroxyproline.. In terms of biological role, type IV dipeptidyl-peptidase which removes N-terminal dipeptides sequentially from polypeptides having unsubstituted N-termini provided that the penultimate residue is proline. This chain is Probable dipeptidyl-aminopeptidase B (dapB), found in Neosartorya fischeri (strain ATCC 1020 / DSM 3700 / CBS 544.65 / FGSC A1164 / JCM 1740 / NRRL 181 / WB 181) (Aspergillus fischerianus).